The primary structure comprises 223 residues: ATP phosphoribosyltransferase (223 aa).

Belongs to the ATP phosphoribosyltransferase family. Short subfamily. In terms of assembly, heteromultimer composed of HisG and HisZ subunits.

The protein resides in the cytoplasm. The catalysed reaction is 1-(5-phospho-beta-D-ribosyl)-ATP + diphosphate = 5-phospho-alpha-D-ribose 1-diphosphate + ATP. It participates in amino-acid biosynthesis; L-histidine biosynthesis; L-histidine from 5-phospho-alpha-D-ribose 1-diphosphate: step 1/9. Functionally, catalyzes the condensation of ATP and 5-phosphoribose 1-diphosphate to form N'-(5'-phosphoribosyl)-ATP (PR-ATP). Has a crucial role in the pathway because the rate of histidine biosynthesis seems to be controlled primarily by regulation of HisG enzymatic activity. The protein is ATP phosphoribosyltransferase of Halothermothrix orenii (strain H 168 / OCM 544 / DSM 9562).